A 355-amino-acid chain; its full sequence is Molybdenum import ATP-binding protein ModC (355 aa).

In terms of domain architecture, ABC transporter spans 1 to 233; sequence MTLIVEAKQR…PSAAADRKEA (233 aa). Position 31-38 (31-38) interacts with ATP; that stretch reads GRSGSGKT. One can recognise a Mop domain in the interval 291 to 355; that stretch reads GLSALNILEG…AIIKTVALEG (65 aa).

Belongs to the ABC transporter superfamily. Molybdate importer (TC 3.A.1.8) family. As to quaternary structure, the complex is composed of two ATP-binding proteins (ModC), two transmembrane proteins (ModB) and a solute-binding protein (ModA).

The protein resides in the cell inner membrane. The enzyme catalyses molybdate(out) + ATP + H2O = molybdate(in) + ADP + phosphate + H(+). Functionally, part of the ABC transporter complex ModABC involved in molybdenum import. Responsible for energy coupling to the transport system. The chain is Molybdenum import ATP-binding protein ModC from Rhizobium etli (strain ATCC 51251 / DSM 11541 / JCM 21823 / NBRC 15573 / CFN 42).